The sequence spans 327 residues: tRNA uridine(34) hydroxylase (327 aa).

In terms of domain architecture, Rhodanese spans 130–224; sequence LDEDTVVLDT…YGKDPEVQGE (95 aa). C184 serves as the catalytic Cysteine persulfide intermediate.

It belongs to the TrhO family.

It carries out the reaction uridine(34) in tRNA + AH2 + O2 = 5-hydroxyuridine(34) in tRNA + A + H2O. In terms of biological role, catalyzes oxygen-dependent 5-hydroxyuridine (ho5U) modification at position 34 in tRNAs. The protein is tRNA uridine(34) hydroxylase of Streptococcus thermophilus (strain ATCC BAA-491 / LMD-9).